We begin with the raw amino-acid sequence, 947 residues long: DEAD-box ATP-dependent RNA helicase 45 (947 aa).

A compositionally biased stretch (acidic residues) spans 1–14 (MEEEEVVVVVDEEE). Disordered regions lie at residues 1–132 (MEEE…EDEI) and 159–221 (SMPA…EEFM). 2 stretches are compositionally biased toward basic and acidic residues: residues 15 to 31 (SERRRQKMIEEEKKRLD) and 42 to 61 (KEWQEQKRLEEEEAKRREQE). Over residues 62–82 (AAAGAGTPAAAAGADGDSNAG) the composition is skewed to low complexity. 2 stretches are compositionally biased toward acidic residues: residues 88–108 (DGEESDEEGYKEDSQNAEDDG) and 196–219 (DDSDSDYDDDDDDEGGSKDEDDEE). The Q motif motif lies at 285-313 (KTWVQSGLTSKLLDTIKKLGFEKPMPIQA). Residues 316 to 494 (LPIIMSGRDC…RKVLTKPVEI (179 aa)) enclose the Helicase ATP-binding domain. An ATP-binding site is contributed by 329–336 (AKTGSGKT). The DEAD box motif lies at 442-445 (DEAD). Positions 479–647 (QVEILARKVL…AVPQDLKGLA (169 aa)) constitute a Helicase C-terminal domain. The interval 658–710 (TEQAHGTGYGGSGFKFNEEEDEARRSAKKAQAREYGYEEDKSDSDSDEEGGVR) is disordered. The segment covering 697-706 (DKSDSDSDEE) has biased composition (acidic residues). Residues 854–879 (TELSVKKAKSELKRVLEDCANHALNL) adopt a coiled-coil conformation.

The protein belongs to the DEAD box helicase family. DDX46/PRP5 subfamily.

The enzyme catalyses ATP + H2O = ADP + phosphate + H(+). In Oryza sativa subsp. japonica (Rice), this protein is DEAD-box ATP-dependent RNA helicase 45.